We begin with the raw amino-acid sequence, 162 residues long: Crossover junction endodeoxyribonuclease RuvC (162 aa).

Active-site residues include Asp-7, Glu-67, and Asp-140. Residues Asp-7, Glu-67, and Asp-140 each coordinate Mg(2+).

This sequence belongs to the RuvC family. Homodimer which binds Holliday junction (HJ) DNA. The HJ becomes 2-fold symmetrical on binding to RuvC with unstacked arms; it has a different conformation from HJ DNA in complex with RuvA. In the full resolvosome a probable DNA-RuvA(4)-RuvB(12)-RuvC(2) complex forms which resolves the HJ. Mg(2+) is required as a cofactor.

The protein resides in the cytoplasm. It catalyses the reaction Endonucleolytic cleavage at a junction such as a reciprocal single-stranded crossover between two homologous DNA duplexes (Holliday junction).. In terms of biological role, the RuvA-RuvB-RuvC complex processes Holliday junction (HJ) DNA during genetic recombination and DNA repair. Endonuclease that resolves HJ intermediates. Cleaves cruciform DNA by making single-stranded nicks across the HJ at symmetrical positions within the homologous arms, yielding a 5'-phosphate and a 3'-hydroxyl group; requires a central core of homology in the junction. The consensus cleavage sequence is 5'-(A/T)TT(C/G)-3'. Cleavage occurs on the 3'-side of the TT dinucleotide at the point of strand exchange. HJ branch migration catalyzed by RuvA-RuvB allows RuvC to scan DNA until it finds its consensus sequence, where it cleaves and resolves the cruciform DNA. This is Crossover junction endodeoxyribonuclease RuvC from Heliobacterium modesticaldum (strain ATCC 51547 / Ice1).